Consider the following 178-residue polypeptide: MNATPEKADDLIVVGKIFSVHGVRGEVKVYSFTDPIENLLDYPRWTLRHEGKVKQVELVSGRGSQKGLVVKLKGLDDRDEARLLSGYEICIPRSLLPNLAADEYYWYQLVGLKVINQDEQLFGKVDHLLETGANDVMVVKPCAGSLDDRERLLPYTEQCVLAIDLEAGVMRVEWDADF.

The region spanning 101 to 178 (ADEYYWYQLV…VMRVEWDADF (78 aa)) is the PRC barrel domain.

It belongs to the RimM family. As to quaternary structure, binds ribosomal protein uS19.

Its subcellular location is the cytoplasm. Functionally, an accessory protein needed during the final step in the assembly of 30S ribosomal subunit, possibly for assembly of the head region. Essential for efficient processing of 16S rRNA. May be needed both before and after RbfA during the maturation of 16S rRNA. It has affinity for free ribosomal 30S subunits but not for 70S ribosomes. The protein is Ribosome maturation factor RimM of Pseudomonas putida (strain ATCC 47054 / DSM 6125 / CFBP 8728 / NCIMB 11950 / KT2440).